The sequence spans 152 residues: Large ribosomal subunit protein uL15 (152 aa).

A disordered region spans residues 1–55 (MRLHELKPNEGATHKKKRVGRGIGSGHGKTSTKGQKGQTSRSGDSKLPARFEGGQ). Residues 28 to 42 (GKTSTKGQKGQTSRS) show a composition bias toward polar residues.

The protein belongs to the universal ribosomal protein uL15 family. In terms of assembly, part of the 50S ribosomal subunit.

Binds to the 23S rRNA. In Sulfurihydrogenibium sp. (strain YO3AOP1), this protein is Large ribosomal subunit protein uL15.